Consider the following 306-residue polypeptide: Palmitoyl-protein thioesterase ABHD10, mitochondrial (306 aa).

The transit peptide at 1 to 52 (MAVARLAAVAAWVPCRSWGCAAVPFGPHRGLSALLARIPQRAPRWLPACRQK) directs the protein to the mitochondrion. The 100-residue stretch at 78-177 (IIFIPGYLSY…KVVALLGVAT (100 aa)) folds into the AB hydrolase-1 domain. Residues Ser152, Asp249, and His279 each act as charge relay system in the active site.

This sequence belongs to the AB hydrolase superfamily.

The protein resides in the mitochondrion. It catalyses the reaction S-hexadecanoyl-L-cysteinyl-[protein] + H2O = L-cysteinyl-[protein] + hexadecanoate + H(+). It carries out the reaction mycophenolic acid O-acyl-beta-D-glucuronide + H2O = mycophenolate + D-glucuronate + H(+). Its activity is regulated as follows. Inhibited by palmostatin-B. Acts as an acyl-protein thioesterase that hydrolyzes fatty acids from acylated residues in proteins. Regulates the mitochondrial S-depalmitoylation of the nucleophilic active site residue of peroxiredoxin-5/PRDX5, a key antioxidant protein, therefore modulating mitochondrial antioxidant ability. Also catalyzes the deglucuronidation of mycophenolic acid acyl-glucuronide, an active metabolite of the immunosuppressant drug mycophenolate. This is Palmitoyl-protein thioesterase ABHD10, mitochondrial (ABHD10) from Pongo abelii (Sumatran orangutan).